Consider the following 242-residue polypeptide: 1-(5-phosphoribosyl)-5-[(5-phosphoribosylamino)methylideneamino] imidazole-4-carboxamide isomerase (242 aa).

The active-site Proton acceptor is D8. Residue D129 is the Proton donor of the active site.

The protein belongs to the HisA/HisF family.

It is found in the cytoplasm. The enzyme catalyses 1-(5-phospho-beta-D-ribosyl)-5-[(5-phospho-beta-D-ribosylamino)methylideneamino]imidazole-4-carboxamide = 5-[(5-phospho-1-deoxy-D-ribulos-1-ylimino)methylamino]-1-(5-phospho-beta-D-ribosyl)imidazole-4-carboxamide. It functions in the pathway amino-acid biosynthesis; L-histidine biosynthesis; L-histidine from 5-phospho-alpha-D-ribose 1-diphosphate: step 4/9. This chain is 1-(5-phosphoribosyl)-5-[(5-phosphoribosylamino)methylideneamino] imidazole-4-carboxamide isomerase, found in Dictyoglomus turgidum (strain DSM 6724 / Z-1310).